The sequence spans 322 residues: Epiphycan (322 aa).

A signal peptide spans 1–19 (MKTLAGLVLGLVIFDAAVT). The O-linked (GalNAc...) threonine glycan is linked to T60. A glycan (O-linked (Xyl...) (dermatan sulfate) serine) is linked at S64. The segment at 64 to 101 (SGNRELLTPPPQPEKAQEEEEEEESTPRLIDGSSPQEP) is disordered. O-linked (GalNAc...) serine glycosylation occurs at S96. Residues 106 to 143 (VLGPHTNEDFPTCLLCTCISTTVYCDDHELDAIPPLPK) enclose the LRRNT domain. A disulfide bridge connects residues C118 and C130. 5 LRR repeats span residues 144–165 (NTAY…DFAS), 168–189 (DLKR…AFRK), 192–213 (QLRE…PTTL), 238–258 (DLHH…PLPE), and 259–280 (NLRA…TFCN). An intrachain disulfide couples C279 to C312. N-linked (GlcNAc...) asparagine glycans are attached at residues N283 and N302. The LRR 6 repeat unit spans residues 290–310 (ALEDIRLDGNPINLSKTPQAY).

The protein belongs to the small leucine-rich proteoglycan (SLRP) family. SLRP class III subfamily. The O-linked polysaccharides on Thr-60 and Ser-96 are probably the mucin type linked to GalNAc. There is one glycosaminoglycan chain, known to be dermatan sulfate, and it is probably the O-glycosylation at Ser-64. Cartilage, ligament, and placenta.

Its subcellular location is the secreted. The protein localises to the extracellular space. It is found in the extracellular matrix. Functionally, may have a role in bone formation and also in establishing the ordered structure of cartilage through matrix organization. This Homo sapiens (Human) protein is Epiphycan (EPYC).